A 569-amino-acid polypeptide reads, in one-letter code: TBCC domain-containing protein 1 (569 aa).

A C-CAP/cofactor C-like domain is found at 304-435 (PRSHRIVVMS…LEDHMARTGL (132 aa)).

It belongs to the TBCC family.

It is found in the cytoplasm. Its subcellular location is the cytoskeleton. The protein resides in the microtubule organizing center. The protein localises to the centrosome. It localises to the spindle pole. Functionally, plays a role in the regulation of centrosome and Golgi apparatus positioning, with consequences on cell shape and cell migration. The protein is TBCC domain-containing protein 1 (Tbccd1) of Rattus norvegicus (Rat).